The chain runs to 100 residues: Urease subunit gamma (100 aa).

This sequence belongs to the urease gamma subunit family. Heterotrimer of UreA (gamma), UreB (beta) and UreC (alpha) subunits. Three heterotrimers associate to form the active enzyme.

It localises to the cytoplasm. It catalyses the reaction urea + 2 H2O + H(+) = hydrogencarbonate + 2 NH4(+). Its pathway is nitrogen metabolism; urea degradation; CO(2) and NH(3) from urea (urease route): step 1/1. The polypeptide is Urease subunit gamma (Pseudomonas syringae pv. tomato (strain ATCC BAA-871 / DC3000)).